A 317-amino-acid polypeptide reads, in one-letter code: Adenosine receptor A3 (317 aa).

The Extracellular segment spans residues 1–14; the sequence is MPVNSTAVSLASVT. Residue asparagine 4 is glycosylated (N-linked (GlcNAc...) asparagine). A helical membrane pass occupies residues 15–37; it reads YISVEILIGLCAIVGNVLVIWVV. The Cytoplasmic portion of the chain corresponds to 38-48; sequence KLNPSLQTTTF. Residues 49–72 traverse the membrane as a helical segment; sequence YFIVSLALADIAVGVLVMPLAIVI. The Extracellular segment spans residues 73–84; sequence SLGVTIHFYSCL. Cysteine 83 and cysteine 165 form a disulfide bridge. A helical membrane pass occupies residues 85-106; it reads LMTCLLMIFTHASIMSLLAIAV. Topologically, residues 107–126 are cytoplasmic; that stretch reads DRYLRVKLTVRYRRVTTQRR. The helical transmembrane segment at 127 to 148 threads the bilayer; that stretch reads IWLALGLCWLVSFLVGLTPMFG. Residues 149-176 lie on the Extracellular side of the membrane; sequence WNMKLSSADKNLTFLPCQFRSVMRMDYM. Residues 177–197 form a helical membrane-spanning segment; sequence VYFSFFTWILIPLVVMCAIYF. Residues 198–230 are Cytoplasmic-facing; that stretch reads DIFYVIRNRLSQNFSGSKETGAFYGREFKTAKS. Residues 231–254 form a helical membrane-spanning segment; sequence LSLVLFLFALSWLPLSIINCIIYF. At 255–260 the chain is on the extracellular side; it reads NGEVPQ. Residues 261 to 283 form a helical membrane-spanning segment; it reads IVLYLGILLSHANSMMNPIVYAY. Residues 284 to 317 are Cytoplasmic-facing; that stretch reads KIKKFKETYLLILKACVICQPSKSMDPSIEQTSE. Cysteine 302 carries S-palmitoyl cysteine lipidation.

This sequence belongs to the G-protein coupled receptor 1 family. Phosphorylation on Thr-315 and Ser-316 may be crucial for rapid desensitization. Phosphorylation on Thr-315 may be necessary for phosphorylation on Ser-316 to occur.

It localises to the cell membrane. Functionally, receptor for adenosine. The activity of this receptor is mediated by G proteins which inhibits adenylyl cyclase. The sequence is that of Adenosine receptor A3 (ADORA3) from Bos taurus (Bovine).